Here is a 101-residue protein sequence, read N- to C-terminus: UPF0473 protein EF_1204 (101 aa).

Belongs to the UPF0473 family.

The sequence is that of UPF0473 protein EF_1204 from Enterococcus faecalis (strain ATCC 700802 / V583).